The following is a 99-amino-acid chain: UPF0235 protein PM1313 (99 aa).

It belongs to the UPF0235 family.

The chain is UPF0235 protein PM1313 from Pasteurella multocida (strain Pm70).